The primary structure comprises 359 residues: Mineralocorticoid receptor (359 aa).

The nuclear receptor DNA-binding region spans phenylalanine 1–serine 49. 4 residues coordinate Zn(2+): cysteine 13, cysteine 19, cysteine 29, and cysteine 32. The NR C4-type zinc-finger motif lies at cysteine 13–cysteine 37. Residues lysine 48–valine 96 form a disordered region. Residues lysine 50–proline 107 form a hinge region. In terms of domain architecture, NR LBD spans tyrosine 108–isoleucine 339. Asparagine 145 and glutamine 151 together coordinate 21-hydroxyprogesterone. Residues asparagine 145 and glutamine 151 each contribute to the aldosterone site. Progesterone-binding residues include asparagine 145 and glutamine 151. The interval lysine 157 to lysine 160 is important for coactivator binding. 21-hydroxyprogesterone-binding residues include arginine 192 and threonine 320. Positions 192 and 320 each coordinate aldosterone. Progesterone is bound by residues arginine 192 and threonine 320.

The protein belongs to the nuclear hormone receptor family. NR3 subfamily.

The protein localises to the cytoplasm. It localises to the nucleus. Functionally, receptor for both mineralocorticoids (MC) such as cortisol. Binds to mineralocorticoid response elements (MRE) and transactivates target genes. The effect of MC is to increase ion and water transport and thus raise extracellular fluid volume and blood pressure and lower potassium levels. This Oncorhynchus mykiss (Rainbow trout) protein is Mineralocorticoid receptor (nr3c2).